A 1177-amino-acid polypeptide reads, in one-letter code: DNA-directed RNA polymerase subunit beta' (1177 aa).

Residues C60, C62, C75, and C78 each contribute to the Zn(2+) site. The Mg(2+) site is built by D450, D452, and D454. C795, C869, C876, and C879 together coordinate Zn(2+).

The protein belongs to the RNA polymerase beta' chain family. As to quaternary structure, the RNAP catalytic core consists of 2 alpha, 1 beta, 1 beta' and 1 omega subunit. When a sigma factor is associated with the core the holoenzyme is formed, which can initiate transcription. Requires Mg(2+) as cofactor. Zn(2+) serves as cofactor.

The enzyme catalyses RNA(n) + a ribonucleoside 5'-triphosphate = RNA(n+1) + diphosphate. DNA-dependent RNA polymerase catalyzes the transcription of DNA into RNA using the four ribonucleoside triphosphates as substrates. This Clostridium botulinum (strain Alaska E43 / Type E3) protein is DNA-directed RNA polymerase subunit beta'.